A 498-amino-acid polypeptide reads, in one-letter code: Glutamyl-tRNA(Gln) amidotransferase subunit A (498 aa).

Residues Lys-85 and Ser-160 each act as charge relay system in the active site. Ser-184 serves as the catalytic Acyl-ester intermediate.

Belongs to the amidase family. GatA subfamily. In terms of assembly, heterotrimer of A, B and C subunits.

It catalyses the reaction L-glutamyl-tRNA(Gln) + L-glutamine + ATP + H2O = L-glutaminyl-tRNA(Gln) + L-glutamate + ADP + phosphate + H(+). Allows the formation of correctly charged Gln-tRNA(Gln) through the transamidation of misacylated Glu-tRNA(Gln) in organisms which lack glutaminyl-tRNA synthetase. The reaction takes place in the presence of glutamine and ATP through an activated gamma-phospho-Glu-tRNA(Gln). The protein is Glutamyl-tRNA(Gln) amidotransferase subunit A of Mycolicibacterium vanbaalenii (strain DSM 7251 / JCM 13017 / BCRC 16820 / KCTC 9966 / NRRL B-24157 / PYR-1) (Mycobacterium vanbaalenii).